The chain runs to 30 residues: Ribosome-inactivating protein momorcochin-S (30 aa).

Belongs to the ribosome-inactivating protein family. Type 1 RIP subfamily. Post-translationally, glycosylated.

The enzyme catalyses Endohydrolysis of the N-glycosidic bond at one specific adenosine on the 28S rRNA.. In terms of biological role, inactivates eukaryotic 60S ribosomal subunits. This Momordica cochinchinensis (Spiny bitter cucumber) protein is Ribosome-inactivating protein momorcochin-S.